Reading from the N-terminus, the 764-residue chain is 5-methyltetrahydropteroyltriglutamate--homocysteine methyltransferase (764 aa).

Residues 16 to 19 and lysine 117 contribute to the 5-methyltetrahydropteroyltri-L-glutamate site; that span reads RELK. L-homocysteine is bound by residues 442-444 and glutamate 495; that span reads IGS. L-methionine contacts are provided by residues 442 to 444 and glutamate 495; that span reads IGS. Residues 526-527 and tryptophan 572 each bind 5-methyltetrahydropteroyltri-L-glutamate; that span reads RC. Aspartate 610 contributes to the L-homocysteine binding site. Aspartate 610 is a binding site for L-methionine. Position 616 (glutamate 616) interacts with 5-methyltetrahydropteroyltri-L-glutamate. Zn(2+)-binding residues include histidine 652, cysteine 654, and glutamate 676. The active-site Proton donor is the histidine 705. Cysteine 737 contacts Zn(2+).

Belongs to the vitamin-B12 independent methionine synthase family. Zn(2+) is required as a cofactor.

It carries out the reaction 5-methyltetrahydropteroyltri-L-glutamate + L-homocysteine = tetrahydropteroyltri-L-glutamate + L-methionine. The protein operates within amino-acid biosynthesis; L-methionine biosynthesis via de novo pathway; L-methionine from L-homocysteine (MetE route): step 1/1. Functionally, catalyzes the transfer of a methyl group from 5-methyltetrahydrofolate to homocysteine resulting in methionine formation. This chain is 5-methyltetrahydropteroyltriglutamate--homocysteine methyltransferase, found in Bordetella pertussis (strain Tohama I / ATCC BAA-589 / NCTC 13251).